We begin with the raw amino-acid sequence, 285 residues long: MAERGGERGVERGGERGDFGRGFGGRGGRGDRGGRGRGGRGGRRGGRASEEEKWVPVTKLGRLVAAGHIKQIEQIYLHSLPVKEYQIIDMLIGPTLKDEVMKIMPVQKQTRAGQRTRFKAFVVVGDGNGHVGLGVKCSKEVATAIRGAIILAKLSVVPVRRGYWGNKIGKPHTVPCKVTGKCGSVTVRMVPAPRGSGIVAARVPKKVLQFAGIDDVFTSSRGSTKTLGNFVKATFDCLQKTYGFLTPEFWKETRFSRSPYQEHTDFLASKALSTSKPDPVVEDQA.

Residues 1–19 (MAERGGERGVERGGERGDF) are compositionally biased toward basic and acidic residues. Residues 1 to 51 (MAERGGERGVERGGERGDFGRGFGGRGGRGDRGGRGRGGRGGRRGGRASEE) are disordered. A compositionally biased stretch (basic residues) spans 35 to 46 (RGRGGRGGRRGG). The 64-residue stretch at 96–159 (LKDEVMKIMP…ILAKLSVVPV (64 aa)) folds into the S5 DRBM domain.

It belongs to the universal ribosomal protein uS5 family. In terms of assembly, interacts with MBD6.

Component of the ribosome, a large ribonucleoprotein complex responsible for the synthesis of proteins in the cell. The small ribosomal subunit (SSU) binds messenger RNAs (mRNAs) and translates the encoded message by selecting cognate aminoacyl-transfer RNA (tRNA) molecules. The large subunit (LSU) contains the ribosomal catalytic site termed the peptidyl transferase center (PTC), which catalyzes the formation of peptide bonds, thereby polymerizing the amino acids delivered by tRNAs into a polypeptide chain. The nascent polypeptides leave the ribosome through a tunnel in the LSU and interact with protein factors that function in enzymatic processing, targeting, and the membrane insertion of nascent chains at the exit of the ribosomal tunnel. Plays a role in the assembly and function of the 40S ribosomal subunit. Mutations in this protein affects the control of translational fidelity. Involved in nucleolar processing of pre-18S ribosomal RNA and ribosome assembly. Also involved in RNA-directed DNA methylation (RdDM). The protein is Small ribosomal subunit protein uS5x of Arabidopsis thaliana (Mouse-ear cress).